The following is a 67-amino-acid chain: Conotoxin Cl6.10 (67 aa).

Residues 1-24 (MKLTCVLIAAVLLLAVCQLDSADA) form the signal peptide. Positions 25-37 (TAYMRKDPSLRSP) are excised as a propeptide. 3 disulfides stabilise this stretch: Cys-43–Cys-57, Cys-50–Cys-61, and Cys-56–Cys-65.

Belongs to the conotoxin O1 superfamily. As to expression, expressed by the venom duct.

It is found in the secreted. The sequence is that of Conotoxin Cl6.10 from Californiconus californicus (California cone).